Reading from the N-terminus, the 88-residue chain is Class I hydrophobin F (88 aa).

The N-terminal stretch at 1-21 is a signal peptide; sequence MLSRLFTVPAILLATLGSAAT. Disulfide bonds link Cys-30–Cys-67, Cys-34–Cys-58, Cys-35–Cys-51, and Cys-68–Cys-84.

The protein belongs to the fungal hydrophobin family.

The protein localises to the secreted. It is found in the cell wall. Its subcellular location is the vacuole. It localises to the cytoplasmic vesicle. Its function is as follows. Aerial growth, conidiation, and dispersal of filamentous fungi in the environment rely upon a capability of their secreting small amphipathic proteins called hydrophobins (HPBs) with low sequence identity. Class I can self-assemble into an outermost layer of rodlet bundles on aerial cell surfaces, conferring cellular hydrophobicity that supports fungal growth, development and dispersal; whereas Class II form highly ordered films at water-air interfaces through intermolecular interactions but contribute nothing to the rodlet structure. Hyd1F contributes to certain cell wall-related features, such as hydrophobicity but is not involved in cell wall-related events during fungal proliferation in host hemocoel. Does not contribute to conidial hydrophobicity. This chain is Class I hydrophobin F, found in Beauveria bassiana (strain ARSEF 2860) (White muscardine disease fungus).